The primary structure comprises 61 residues: Small ribosomal subunit protein uS14 (61 aa).

Zn(2+)-binding residues include cysteine 24, cysteine 27, cysteine 40, and cysteine 43.

It belongs to the universal ribosomal protein uS14 family. Zinc-binding uS14 subfamily. As to quaternary structure, part of the 30S ribosomal subunit. Contacts proteins S3 and S10. Requires Zn(2+) as cofactor.

Functionally, binds 16S rRNA, required for the assembly of 30S particles and may also be responsible for determining the conformation of the 16S rRNA at the A site. The polypeptide is Small ribosomal subunit protein uS14 (Sulfurimonas denitrificans (strain ATCC 33889 / DSM 1251) (Thiomicrospira denitrificans (strain ATCC 33889 / DSM 1251))).